Consider the following 148-residue polypeptide: Large ribosomal subunit protein uL15 (148 aa).

The span at 1 to 30 shows a compositional bias: basic residues; it reads MPSRLRKTRKLRGHVSHGHGRIGKHRKHPG. Residues 1-39 are disordered; that stretch reads MPSRLRKTRKLRGHVSHGHGRIGKHRKHPGGRGNAGGLH. (3S)-3-hydroxyhistidine is present on histidine 39. N6-acetyllysine occurs at positions 47 and 55. At serine 68 the chain carries Phosphoserine. At lysine 110 the chain carries N6-acetyllysine.

This sequence belongs to the universal ribosomal protein uL15 family. As to quaternary structure, component of the large ribosomal subunit. In terms of processing, hydroxylated on His-39 by MINA.

It is found in the cytoplasm. Component of the large ribosomal subunit. The ribosome is a large ribonucleoprotein complex responsible for the synthesis of proteins in the cell. This chain is Large ribosomal subunit protein uL15 (RPL27A), found in Macaca fascicularis (Crab-eating macaque).